A 530-amino-acid chain; its full sequence is Arginine--tRNA ligase (530 aa).

The 'HIGH' region motif lies at 113 to 123 (ANPTGPLHIGH).

The protein belongs to the class-I aminoacyl-tRNA synthetase family. Monomer.

The protein resides in the cytoplasm. The catalysed reaction is tRNA(Arg) + L-arginine + ATP = L-arginyl-tRNA(Arg) + AMP + diphosphate. This chain is Arginine--tRNA ligase, found in Campylobacter jejuni subsp. doylei (strain ATCC BAA-1458 / RM4099 / 269.97).